The primary structure comprises 172 residues: Adenine phosphoribosyltransferase (172 aa).

The protein belongs to the purine/pyrimidine phosphoribosyltransferase family. As to quaternary structure, homodimer.

The protein localises to the cytoplasm. It carries out the reaction AMP + diphosphate = 5-phospho-alpha-D-ribose 1-diphosphate + adenine. The protein operates within purine metabolism; AMP biosynthesis via salvage pathway; AMP from adenine: step 1/1. Functionally, catalyzes a salvage reaction resulting in the formation of AMP, that is energically less costly than de novo synthesis. The sequence is that of Adenine phosphoribosyltransferase from Clostridium beijerinckii (strain ATCC 51743 / NCIMB 8052) (Clostridium acetobutylicum).